The primary structure comprises 265 residues: Deoxyribose-phosphate aldolase 2 (265 aa).

The active-site Proton donor/acceptor is the Asp-108. Catalysis depends on Lys-173, which acts as the Schiff-base intermediate with acetaldehyde. Catalysis depends on Lys-207, which acts as the Proton donor/acceptor.

It belongs to the DeoC/FbaB aldolase family. DeoC type 2 subfamily.

The protein resides in the cytoplasm. It carries out the reaction 2-deoxy-D-ribose 5-phosphate = D-glyceraldehyde 3-phosphate + acetaldehyde. It participates in carbohydrate degradation; 2-deoxy-D-ribose 1-phosphate degradation; D-glyceraldehyde 3-phosphate and acetaldehyde from 2-deoxy-alpha-D-ribose 1-phosphate: step 2/2. Functionally, catalyzes a reversible aldol reaction between acetaldehyde and D-glyceraldehyde 3-phosphate to generate 2-deoxy-D-ribose 5-phosphate. The chain is Deoxyribose-phosphate aldolase 2 (deoC2) from Yersinia pestis.